Reading from the N-terminus, the 551-residue chain is MSEMQGNKIVVDPITRIEGHLRIEVEVEGGKIKNAWSMSTLFRGLEMILKGRDPRDAQHFTQRACGVCTYVHALASVRAVDNCVGVKIPENATLMRNLTMGAQYMHDHLVHFYHLHALDWVNVANALNADPAKAARLANDLSPRKTTTESLKAVQAKVKALVESGQLGIFTNAYFLGGHPAYVLPAEVDLIATAHYLEALRVQVKAARAMAIFGAKNPHTQFTVVGGCTNYDSLRPERIAEFRKLYKEVREFIEQVYITDLLAVAGFYKNWAGIGKTSNFLTCGEFPTDEYDLNSRYTPQGVIWGNDLSKVDDFNPDLIEEHVKYSWYEGADAHHPYKGVTKPKWTEFHGEDRYSWMKAPRYKGEAFEVGPLASVLVAYAKKHEPTVKAVDLVLKTLGVGPEALFSTLGRTAARGIQCLTAAQEVEVWLDKLEANVKAGKDDLYTDWQYPTESQGVGFVNAPRGMLSHWIVQRGGKIENFQHVVPSTWNLGPRCAERKLSAVEQALIGTPIADPKRPVEILRTVHSYDPCIACGVHVIDPESNQVHKFRIL.

The Ni(2+) site is built by C65, C68, C530, and C533. A propeptide spanning residues 537–551 (VIDPESNQVHKFRIL) is cleaved from the precursor.

It belongs to the [NiFe]/[NiFeSe] hydrogenase large subunit family. Heterodimer of a large and a small subunit. Requires Ni(2+) as cofactor.

The protein resides in the periplasm. The enzyme catalyses 2 Fe(III)-[cytochrome c3] + H2 = 2 Fe(II)-[cytochrome c3] + 2 H(+). This is Periplasmic [NiFe] hydrogenase large subunit (hydB) from Megalodesulfovibrio gigas (Desulfovibrio gigas).